Reading from the N-terminus, the 435-residue chain is 3-ketoacyl-CoA thiolase (435 aa).

The active-site Acyl-thioester intermediate is Cys98. Catalysis depends on proton acceptor residues His391 and Cys421.

It belongs to the thiolase-like superfamily. Thiolase family. As to quaternary structure, heterotetramer of two alpha chains (FadJ) and two beta chains (FadI).

Its subcellular location is the cytoplasm. It carries out the reaction an acyl-CoA + acetyl-CoA = a 3-oxoacyl-CoA + CoA. It participates in lipid metabolism; fatty acid beta-oxidation. Catalyzes the final step of fatty acid oxidation in which acetyl-CoA is released and the CoA ester of a fatty acid two carbons shorter is formed. This Vibrio vulnificus (strain CMCP6) protein is 3-ketoacyl-CoA thiolase.